A 267-amino-acid chain; its full sequence is Proenkephalin-A (267 aa).

The N-terminal stretch at Met1–Ala24 is a signal peptide. 3 disulfide bridges follow: Cys26–Cys48, Cys30–Cys52, and Cys33–Cys65. A compositionally biased stretch (basic and acidic residues) spans Thr163–Gly175. The segment at Thr163–Val182 is disordered. Propeptides lie at residues Ser196–Gln207 and Val217–Gln227. Residue Ser251 is modified to Phosphoserine.

It belongs to the opioid neuropeptide precursor family. Proenkephalin-A is cleaved by CTSL to generate Met-enkephalin. In terms of processing, processed and degraded by ACE. Post-translationally, probably cleaved by ACE. Processed by ACE to generate Met-enkephalin in the nucleus accumbens of the brain. In terms of processing, the N-terminal domain contains 6 conserved cysteines thought to be involved in disulfide bonding and/or processing.

The protein resides in the cytoplasmic vesicle. It localises to the secretory vesicle. Its subcellular location is the chromaffin granule lumen. It is found in the secreted. Functionally, neuropeptide that competes with and mimic the effects of opiate drugs. They play a role in a number of physiologic functions, including pain perception and responses to stress. In terms of biological role, met-enkephalin-Arg-Phe neuropeptide acts as a strong ligand of Mu-type opioid receptor OPRM1. Met-enkephalin-Arg-Phe-binding to OPRM1 in the nucleus accumbens of the brain increases activation of OPRM1, leading to long-term synaptic depression of glutamate release. Its function is as follows. Increases glutamate release in the striatum and decreases GABA concentration in the striatum. Increases glutamate release in the striatum. This chain is Proenkephalin-A, found in Homo sapiens (Human).